The sequence spans 229 residues: Lytic polysaccharide monooxygenase-like protein ham-7 (229 aa).

The signal sequence occupies residues methionine 1–alanine 17. Histidine 18 lines the Cu(2+) pocket. 2 cysteine pairs are disulfide-bonded: cysteine 47–cysteine 157 and cysteine 122–cysteine 178. 5 N-linked (GlcNAc...) asparagine glycosylation sites follow: asparagine 55, asparagine 98, asparagine 139, asparagine 174, and asparagine 180. The GPI-anchor amidated serine moiety is linked to residue serine 206. Residues alanine 207 to leucine 229 constitute a propeptide, removed in mature form.

The protein belongs to the X325 family. The cofactor is Cu(2+).

The protein localises to the cell membrane. Its function is as follows. Lytic polysaccharide monooxygenase-like protein that has diverged to biological functions other than polysaccharide degradation since it does not perform oxidative cleavage of polysaccharides. Acts as the major cell wall sensor that regulates MAK-1-dependent hyphal anastomosis, the fusion of hyphal cells. May also act as a cell surface-bound protein that functions in the copper-accumulation pathway. This chain is Lytic polysaccharide monooxygenase-like protein ham-7, found in Neurospora crassa (strain ATCC 24698 / 74-OR23-1A / CBS 708.71 / DSM 1257 / FGSC 987).